The sequence spans 240 residues: MORN repeat-containing protein 3 (240 aa).

An interaction with MDM2 region spans residues 6–35; it reads CPKKSESLWKGWDRKAQRNGLRSQVYAVNG. MORN repeat units follow at residues 38 to 60, 62 to 84, 91 to 113, 114 to 136, 137 to 159, 160 to 182, and 184 to 205; these read YVGE…KKGA, YEGD…DQQT, YSGW…PKEY, YEGD…NGDI, YEGQ…NGNR, YEGC…DHGQ, and FEGF…GRDE. Residues 76 to 100 are interaction with SIRT1; sequence TLSLPDQQTGKCRRVYSGWWKGDKK. Positions 206 to 240 are interaction with TP53; that stretch reads APEPTQFPIPEVKILDPDGVLAEALAMFRKTEEGD.

Interacts with MEIG1. Interacts with TP53, MDM2 and SIRT1; the interactions mediate post-transcriptional modifications of TP53 by MDM2 and SIRT1.

It localises to the cytoplasmic vesicle. The protein resides in the secretory vesicle. The protein localises to the acrosome. Assembles a suppression complex (suppresome) by tethering SIRT1 and MDM2 to regulate composite modifications of p53/TP53. Confers both deacetylation-mediated functional inactivation, by SIRT1, and ubiquitination-dependent degradation, by MDM2, of p53/TP53, promoting a proliferative and cell survival behaviors. May play a role in the regulation of spermatogenesis. This is MORN repeat-containing protein 3 from Homo sapiens (Human).